A 378-amino-acid polypeptide reads, in one-letter code: 1-acyl-sn-glycerol-3-phosphate acyltransferase delta (378 aa).

Residues 11-31 (FLCHLVFCYVFIASGLIVNAI) form a helical membrane-spanning segment. Residues 96–101 (HKFEID) carry the HXXXXD motif motif. 3 consecutive transmembrane segments (helical) span residues 125 to 145 (ELAYVPIIGWMWYFVEMIFCT), 311 to 331 (WLFWASLLLYPFFQFLVSMVS), and 338 to 358 (LASLVLIFCMASMGVRWMIGV).

It belongs to the 1-acyl-sn-glycerol-3-phosphate acyltransferase family.

The protein resides in the endoplasmic reticulum membrane. It catalyses the reaction a 1-acyl-sn-glycero-3-phosphate + an acyl-CoA = a 1,2-diacyl-sn-glycero-3-phosphate + CoA. The enzyme catalyses (4Z,7Z,10Z,13Z,16Z,19Z)-docosahexaenoyl-CoA + 1-hexadecanoyl-sn-glycero-3-phosphate = 1-hexadecanoyl-2-(4Z,7Z,10Z,13Z,16Z,19Z-docosahexaenoyl)-sn-glycero-3-phosphate + CoA. The catalysed reaction is 1-octadecanoyl-sn-glycero-3-phosphate + (9Z,12Z)-octadecadienoyl-CoA = 1-octadecanoyl-2-(9Z,12Z-octadecadienoyl)-sn-glycero-3-phosphate + CoA. It carries out the reaction 1-octadecanoyl-sn-glycero-3-phosphate + (4Z,7Z,10Z,13Z,16Z,19Z)-docosahexaenoyl-CoA = 1-octadecanoyl-2-(4Z,7Z,10Z,13Z,16Z,19Z-docosahexaenoyl)-sn-glycero-3-phosphate + CoA. It catalyses the reaction (4Z,7Z,10Z,13Z,16Z,19Z)-docosahexaenoyl-CoA + 1-(9Z-octadecenoyl)-sn-glycero-3-phosphate = 1-(9Z-octadecenoyl)-2-(4Z,7Z,10Z,13Z,16Z,19Z-docosahexaenoyl)-sn-glycero-3-phosphate + CoA. It participates in phospholipid metabolism; CDP-diacylglycerol biosynthesis; CDP-diacylglycerol from sn-glycerol 3-phosphate: step 2/3. In terms of biological role, converts 1-acyl-sn-glycerol-3-phosphate (lysophosphatidic acid or LPA) into 1,2-diacyl-sn-glycerol-3-phosphate (phosphatidic acid or PA) by incorporating an acyl moiety at the sn-2 position of the glycerol backbone. Exhibits high acyl-CoA specificity for polyunsaturated fatty acyl-CoA, especially docosahexaenoyl-CoA (22:6-CoA, DHA-CoA). The sequence is that of 1-acyl-sn-glycerol-3-phosphate acyltransferase delta (Agpat4) from Rattus norvegicus (Rat).